A 352-amino-acid polypeptide reads, in one-letter code: D-alanine--D-alanine ligase A (352 aa).

The region spanning 138–341 (KRMVQSAGLV…PPKLVGALVE (204 aa)) is the ATP-grasp domain. 165–220 (ECLGSSTLFVKPATSGSSIGVSRVSNALEYAAAFAIAAREDTKVLVEAAVCGREIE) is a binding site for ATP. Residues Asp295, Glu308, and Asn310 each coordinate Mg(2+).

Belongs to the D-alanine--D-alanine ligase family. It depends on Mg(2+) as a cofactor. Mn(2+) is required as a cofactor.

The protein resides in the cytoplasm. The enzyme catalyses 2 D-alanine + ATP = D-alanyl-D-alanine + ADP + phosphate + H(+). It functions in the pathway cell wall biogenesis; peptidoglycan biosynthesis. Its function is as follows. Cell wall formation. This Pseudomonas putida (strain ATCC 47054 / DSM 6125 / CFBP 8728 / NCIMB 11950 / KT2440) protein is D-alanine--D-alanine ligase A.